The sequence spans 40 residues: Protamine-1 (40 aa).

A disordered region spans residues 1–40 (MPPRRKRVSSAPRRRRRTYRRTTAHKHQDRPVHRRRRRRH).

In terms of tissue distribution, testis.

The protein resides in the nucleus. Its subcellular location is the chromosome. In terms of biological role, protamines substitute for histones in the chromatin of sperm during the haploid phase of spermatogenesis. They compact sperm DNA into a highly condensed, stable and inactive complex. The protein is Protamine-1 (PBP1) of Bufo japonicus (Japanese common toad).